The primary structure comprises 474 residues: Proline--tRNA ligase (474 aa).

The protein belongs to the class-II aminoacyl-tRNA synthetase family. ProS type 3 subfamily. Homodimer.

The protein localises to the cytoplasm. The enzyme catalyses tRNA(Pro) + L-proline + ATP = L-prolyl-tRNA(Pro) + AMP + diphosphate. Its function is as follows. Catalyzes the attachment of proline to tRNA(Pro) in a two-step reaction: proline is first activated by ATP to form Pro-AMP and then transferred to the acceptor end of tRNA(Pro). This chain is Proline--tRNA ligase, found in Onion yellows phytoplasma (strain OY-M).